A 259-amino-acid chain; its full sequence is Deoxyribose-phosphate aldolase (259 aa).

The active-site Proton donor/acceptor is aspartate 102. Residue lysine 167 is the Schiff-base intermediate with acetaldehyde of the active site. Catalysis depends on lysine 201, which acts as the Proton donor/acceptor.

The protein belongs to the DeoC/FbaB aldolase family. DeoC type 2 subfamily.

The protein resides in the cytoplasm. It catalyses the reaction 2-deoxy-D-ribose 5-phosphate = D-glyceraldehyde 3-phosphate + acetaldehyde. It participates in carbohydrate degradation; 2-deoxy-D-ribose 1-phosphate degradation; D-glyceraldehyde 3-phosphate and acetaldehyde from 2-deoxy-alpha-D-ribose 1-phosphate: step 2/2. Its function is as follows. Catalyzes a reversible aldol reaction between acetaldehyde and D-glyceraldehyde 3-phosphate to generate 2-deoxy-D-ribose 5-phosphate. The protein is Deoxyribose-phosphate aldolase of Serratia proteamaculans (strain 568).